A 341-amino-acid chain; its full sequence is HTH-type transcriptional repressor PurR (341 aa).

The HTH lacI-type domain maps to 2 to 56; that stretch reads ATIKDVAKRANVSTTTVSHVINKTRFVAEETRNAVWAAIKELHYSPSAVARSLKV. The H-T-H motif DNA-binding region spans 4–23; sequence IKDVAKRANVSTTTVSHVIN. A DNA-binding region spans residues 48-56; the sequence is SAVARSLKV. The hypoxanthine site is built by tyrosine 73, arginine 190, threonine 192, phenylalanine 221, and aspartate 275.

Homodimer.

It participates in purine metabolism; purine nucleotide biosynthesis [regulation]. In terms of biological role, is the main repressor of the genes involved in the de novo synthesis of purine nucleotides, regulating purB, purC, purEK, purF, purHD, purL, purMN and guaBA expression. PurR is allosterically activated to bind its cognate DNA by binding the purine corepressors, hypoxanthine or guanine, thereby effecting transcription repression. The polypeptide is HTH-type transcriptional repressor PurR (Klebsiella pneumoniae subsp. pneumoniae (strain ATCC 700721 / MGH 78578)).